The sequence spans 403 residues: Probable tRNA sulfurtransferase (403 aa).

In terms of domain architecture, THUMP spans 60-165 (QLAEERLKPI…KEGVFLSCRT (106 aa)). ATP contacts are provided by residues 183–184 (ML), 208–209 (HF), Arg-265, Gly-287, and Gln-296.

It belongs to the ThiI family.

It is found in the cytoplasm. The catalysed reaction is [ThiI sulfur-carrier protein]-S-sulfanyl-L-cysteine + a uridine in tRNA + 2 reduced [2Fe-2S]-[ferredoxin] + ATP + H(+) = [ThiI sulfur-carrier protein]-L-cysteine + a 4-thiouridine in tRNA + 2 oxidized [2Fe-2S]-[ferredoxin] + AMP + diphosphate. The enzyme catalyses [ThiS sulfur-carrier protein]-C-terminal Gly-Gly-AMP + S-sulfanyl-L-cysteinyl-[cysteine desulfurase] + AH2 = [ThiS sulfur-carrier protein]-C-terminal-Gly-aminoethanethioate + L-cysteinyl-[cysteine desulfurase] + A + AMP + 2 H(+). Its pathway is cofactor biosynthesis; thiamine diphosphate biosynthesis. Its function is as follows. Catalyzes the ATP-dependent transfer of a sulfur to tRNA to produce 4-thiouridine in position 8 of tRNAs, which functions as a near-UV photosensor. Also catalyzes the transfer of sulfur to the sulfur carrier protein ThiS, forming ThiS-thiocarboxylate. This is a step in the synthesis of thiazole, in the thiamine biosynthesis pathway. The sulfur is donated as persulfide by IscS. The chain is Probable tRNA sulfurtransferase from Listeria monocytogenes serotype 4a (strain HCC23).